A 481-amino-acid polypeptide reads, in one-letter code: Dihydrolipoyl dehydrogenase (481 aa).

FAD is bound by residues 34–42 (EREHMGGIC) and Lys-51. Cys-42 and Cys-47 form a disulfide bridge. NAD(+) is bound by residues 195 to 199 (GSGAI), Glu-218, and 284 to 287 (AVGV). FAD contacts are provided by Asp-326 and Ala-334. Residue His-460 is the Proton acceptor of the active site.

This sequence belongs to the class-I pyridine nucleotide-disulfide oxidoreductase family. Homodimer. It depends on FAD as a cofactor.

Its subcellular location is the cytoplasm. It catalyses the reaction N(6)-[(R)-dihydrolipoyl]-L-lysyl-[protein] + NAD(+) = N(6)-[(R)-lipoyl]-L-lysyl-[protein] + NADH + H(+). In terms of biological role, lipoamide dehydrogenase is a component of the alpha-ketoacid dehydrogenase complexes. This is Dihydrolipoyl dehydrogenase (lpdA) from Rhizobium etli (strain ATCC 51251 / DSM 11541 / JCM 21823 / NBRC 15573 / CFN 42).